The following is a 160-amino-acid chain: Large ribosomal subunit protein uL30m (160 aa).

The N-terminal 34 residues, 1–34 (MAGVLRSAFPRPPCRLQTVKKGAESLIGTEWIRH), are a transit peptide targeting the mitochondrion. Positions 44 to 64 (KVFQPKPEDHEKYGGDPQNPH) are disordered.

It belongs to the universal ribosomal protein uL30 family. In terms of assembly, component of the mitochondrial ribosome large subunit (39S) which comprises a 16S rRNA and about 50 distinct proteins.

The protein resides in the mitochondrion. The chain is Large ribosomal subunit protein uL30m (Mrpl30) from Mus musculus (Mouse).